Reading from the N-terminus, the 73-residue chain is Large ribosomal subunit protein bL31 (73 aa).

The protein belongs to the bacterial ribosomal protein bL31 family. Type A subfamily. As to quaternary structure, part of the 50S ribosomal subunit.

Binds the 23S rRNA. This is Large ribosomal subunit protein bL31 from Paracoccus denitrificans (strain Pd 1222).